We begin with the raw amino-acid sequence, 292 residues long: Ribosomal RNA small subunit methyltransferase A (292 aa).

Residues N28, L30, G55, E76, D101, and N126 each coordinate S-adenosyl-L-methionine.

The protein belongs to the class I-like SAM-binding methyltransferase superfamily. rRNA adenine N(6)-methyltransferase family. RsmA subfamily.

It localises to the cytoplasm. The catalysed reaction is adenosine(1518)/adenosine(1519) in 16S rRNA + 4 S-adenosyl-L-methionine = N(6)-dimethyladenosine(1518)/N(6)-dimethyladenosine(1519) in 16S rRNA + 4 S-adenosyl-L-homocysteine + 4 H(+). In terms of biological role, specifically dimethylates two adjacent adenosines (A1518 and A1519) in the loop of a conserved hairpin near the 3'-end of 16S rRNA in the 30S particle. May play a critical role in biogenesis of 30S subunits. This is Ribosomal RNA small subunit methyltransferase A from Bacillus mycoides (strain KBAB4) (Bacillus weihenstephanensis).